We begin with the raw amino-acid sequence, 460 residues long: Receptor-like cytosolic serine/threonine-protein kinase RBK2 (460 aa).

Positions 1–67 (MNSASAHDLR…DADTDVQCKN (67 aa)) are disordered. Basic and acidic residues predominate over residues 7–23 (HDLRLLEVDKEKQDPKS). The Protein kinase domain occupies 143 to 415 (FSPENIIGRG…VELLLGHEDV (273 aa)). ATP is bound by residues 149 to 157 (IGRGGYADV) and K171. Residue D267 is the Proton acceptor of the active site. Residue T307 is modified to Phosphothreonine. At Y315 the chain carries Phosphotyrosine.

The protein belongs to the protein kinase superfamily. Ser/Thr protein kinase family. As to quaternary structure, interacts with ARAC5 and ARAC10.

It is found in the cytoplasm. It carries out the reaction L-seryl-[protein] + ATP = O-phospho-L-seryl-[protein] + ADP + H(+). The enzyme catalyses L-threonyl-[protein] + ATP = O-phospho-L-threonyl-[protein] + ADP + H(+). The protein is Receptor-like cytosolic serine/threonine-protein kinase RBK2 (RBK2) of Arabidopsis thaliana (Mouse-ear cress).